We begin with the raw amino-acid sequence, 328 residues long: Phosphate acyltransferase (328 aa).

It belongs to the PlsX family. As to quaternary structure, homodimer. Probably interacts with PlsY.

The protein localises to the cytoplasm. The enzyme catalyses a fatty acyl-[ACP] + phosphate = an acyl phosphate + holo-[ACP]. Its pathway is lipid metabolism; phospholipid metabolism. In terms of biological role, catalyzes the reversible formation of acyl-phosphate (acyl-PO(4)) from acyl-[acyl-carrier-protein] (acyl-ACP). This enzyme utilizes acyl-ACP as fatty acyl donor, but not acyl-CoA. The polypeptide is Phosphate acyltransferase (Pseudothermotoga lettingae (strain ATCC BAA-301 / DSM 14385 / NBRC 107922 / TMO) (Thermotoga lettingae)).